Reading from the N-terminus, the 246-residue chain is E3 ubiquitin-protein ligase MARCHF2 (246 aa).

The RING-CH-type zinc finger occupies 56–116 (DTPSDGPFCR…ELCHTEFAVE (61 aa)). The required for inhibition of HIV-1 virus production and VSV G protein expression stretch occupies residues 56–116 (DTPSDGPFCR…ELCHTEFAVE (61 aa)). 8 residues coordinate Zn(2+): C64, C67, C80, C82, H90, C93, C106, and C109. Positions 121-246 (PLTEWLKDPG…LKKVAEETPV (126 aa)) are required for interaction with IKBKG. Helical transmembrane passes span 138–158 (LCCDMVCFLFITPLAAISGWL) and 175–195 (AVGLIALTIALFTIYVLWTLV).

Interacts with STX6; the interaction promotes MARCHF2-mediated ubiquitination and degradation of CFTR. Interacts with MARCHF3. Interacts with GOPC/CAL; the interaction leads to CFTR ubiquitination and degradation. Interacts with CFTR; the interaction leads to CFTR ubiqtuitination and degradation. Interacts (via PDZ domain) with DLG1 (via PDZ domains); the interaction leads to DLG1 ubiqtuitination and degradation. Interacts with ERGIC3. Interacts with ADRB2. Interacts with IKBKG/NEMO; during the late stages of macrophage viral and bacterial infection; the interaction leads to ubiquitination and degradation of IKBKG/NEMO. Broadly expressed.

Its subcellular location is the endoplasmic reticulum membrane. It is found in the lysosome membrane. The protein resides in the endosome membrane. It localises to the golgi apparatus membrane. The protein localises to the cytoplasm. Its subcellular location is the cell membrane. It carries out the reaction S-ubiquitinyl-[E2 ubiquitin-conjugating enzyme]-L-cysteine + [acceptor protein]-L-lysine = [E2 ubiquitin-conjugating enzyme]-L-cysteine + N(6)-ubiquitinyl-[acceptor protein]-L-lysine.. It functions in the pathway protein modification; protein ubiquitination. E3 ubiquitin-protein ligase that may mediate ubiquitination of TFRC and CD86, and promote their subsequent endocytosis and sorting to lysosomes via multivesicular bodies. E3 ubiquitin ligases accept ubiquitin from an E2 ubiquitin-conjugating enzyme in the form of a thioester and then directly transfer the ubiquitin to targeted substrates. Together with GOPC/CAL mediates the ubiquitination and lysosomal degradation of CFTR. Ubiquitinates and therefore mediates the degradation of DLG1. Regulates the intracellular trafficking and secretion of alpha1-antitrypsin/SERPINA1 and HP/haptoglobin via ubiquitination and degradation of the cargo receptor ERGIC3. Negatively regulates the antiviral and antibacterial immune response by repression of the NF-kB and type 1 IFN signaling pathways, via MARCHF2-mediated K48-linked polyubiquitination of IKBKG/NEMO, resulting in its proteasomal degradation. May be involved in endosomal trafficking through interaction with STX6. Functionally, (Microbial infection) Positively regulates the degradation of Vesicular stomatitis virus (VSV) G protein via the lysosomal degradation pathway. Represses HIV-1 viral production and may inhibit the translocation of HIV-1 env to the cell surface, resulting in decreased viral cell-cell transmission. The protein is E3 ubiquitin-protein ligase MARCHF2 of Homo sapiens (Human).